Reading from the N-terminus, the 498-residue chain is Diacylglycerol O-acyltransferase 1 (498 aa).

The segment at 1 to 66 (MGDRGGAGSS…AHTRDKDGRT (66 aa)) is disordered. Over 1-92 (MGDRGGAGSS…SLFSSDSGFS (92 aa)) the chain is Cytoplasmic. Residues 1–100 (MGDRGGAGSS…FSNYRGILNW (100 aa)) are involved in homomerization. Ser20 carries the phosphoserine modification. A helical transmembrane segment spans residues 93-127 (NYRGILNWCVVMLILSNARLFLENLIKYGILVDPI). Over 128-139 (QVVSLFLKDPYS) the chain is Lumenal. Residues 128 to 139 (QVVSLFLKDPYS) are extracellular loop 1 (EL1). A helical membrane pass occupies residues 140 to 165 (WPAPCVIIASNIFVVAAFQIEKRLAV). The tract at residues 140-498 (WPAPCVIIAS…VLNYDAPVGV (359 aa)) is MBOAT fold. Residues 166–170 (GALTE) lie on the Cytoplasmic side of the membrane. The helical transmembrane segment at 171 to 193 (QMGLLLHVVNLATIICFPAAVAL) threads the bilayer. The Lumenal portion of the chain corresponds to 194 to 200 (LVESITP). Residues 201-232 (VGSVFALASYSIMFLKLYSYRDVNLWCRQRRV) traverse the membrane as a helical segment. Topologically, residues 233-284 (KAKAVSTGKKVSGAAAQQAVSYPDNLTYRDLYYFIFAPTLCYELNFPRSPRI) are cytoplasmic. Residues 235–287 (KAVSTGKKVSGAAAQQAVSYPDNLTYRDLYYFIFAPTLCYELNFPRSPRIRKR) are intracellular loop 1 (IL1). Residues 285 to 319 (RKRFLLRRVLEMLFFTQLQVGLIQQWMVPTIQNSM) form a helical membrane-spanning segment. Residues 320–326 (KPFKDMD) are Lumenal-facing. A helical transmembrane segment spans residues 327 to 364 (YSRIIERLLKLAVPNHLIWLIFFYWFFHSCLNAVAELL). Topologically, residues 365-410 (QFGDREFYRDWWNAESVTYFWQNWNIPVHKWCIRHFYKPMLRHGSS) are cytoplasmic. The interval 365-410 (QFGDREFYRDWWNAESVTYFWQNWNIPVHKWCIRHFYKPMLRHGSS) is intracellular loop 2 (IL2). The FYXDWWN motif signature appears at 371-377 (FYRDWWN). An acyl-CoA-binding positions include 385-393 (WQNWNIPVH), Tyr401, and Arg415. Positions 391 to 405 (PVHKWCIRHFYKPML) are amphipathic helix (AH). A helical transmembrane segment spans residues 411-431 (KWVARTGVFLTSAFFHEYLVS). Residue His426 is part of the active site. The Lumenal segment spans residues 432-439 (VPLRMFRL). The chain crosses the membrane as a helical span at residues 440-458 (WAFTAMMAQVPLAWIVGRF). Topologically, residues 459–460 (FQ) are cytoplasmic. Residues 461–492 (GNYGNAAVWVTLIIGQPVAVLMYVHDYYVLNY) traverse the membrane as a helical segment. Tyr488 serves as a coordination point for an acyl-CoA. Topologically, residues 493 to 498 (DAPVGV) are lumenal.

Belongs to the membrane-bound acyltransferase family. Sterol o-acyltransferase subfamily. As to quaternary structure, homodimer or homotetramer; both forms have similar enzymatic activities.

Its subcellular location is the endoplasmic reticulum membrane. It catalyses the reaction an acyl-CoA + a 1,2-diacyl-sn-glycerol = a triacyl-sn-glycerol + CoA. The enzyme catalyses all-trans-retinol + an acyl-CoA = an all-trans-retinyl ester + CoA. It carries out the reaction 1-octadecanoyl-2-(5Z,8Z,11Z,14Z-eicosatetraenoyl)-sn-glycerol + (9Z)-octadecenoyl-CoA = 1-octadecanoyl-2-(5Z,8Z,11Z,14Z)-eicosatetraenoyl-3-(9Z)-octadecenoyl-sn-glycerol + CoA. The catalysed reaction is hexadecane-1,2-diol + 2 hexadecanoyl-CoA = 1,2-O,O-dihexadecanoyl-1,2-hexadecanediol + 2 CoA. It catalyses the reaction hexadecane-1,2-diol + hexadecanoyl-CoA = 2-hydroxyhexadecyl hexadecanoate + CoA. The enzyme catalyses 2-(9Z-octadecenoyl)-glycerol + hexadecanoyl-CoA = 1-hexadecanoyl-2-(9Z-octadecenoyl)-sn-glycerol + CoA. It carries out the reaction 1,2-di-(9Z-octadecenoyl)-sn-glycerol + hexadecanoyl-CoA = 1,2-di-(9Z)-octadecenoyl-3-hexadecanoyl-sn-glycerol + CoA. The catalysed reaction is hexadecan-1-ol + hexadecanoyl-CoA = hexadecanyl hexadecanoate + CoA. It catalyses the reaction all-trans-retinol + hexadecanoyl-CoA = all-trans-retinyl hexadecanoate + CoA. The enzyme catalyses 13-cis-retinol + hexadecanoyl-CoA = 13-cis-retinyl hexadecanoate + CoA. It carries out the reaction 1,2-di-(9Z-octadecenoyl)-sn-glycerol + (9Z)-octadecenoyl-CoA = 1,2,3-tri-(9Z-octadecenoyl)-glycerol + CoA. The catalysed reaction is 1,3-di-(9Z-octadecenoyl)-glycerol + (9Z)-octadecenoyl-CoA = 1,2,3-tri-(9Z-octadecenoyl)-glycerol + CoA. It catalyses the reaction 2,3-di-(9Z)-octadecenoyl-sn-glycerol + (9Z)-octadecenoyl-CoA = 1,2,3-tri-(9Z-octadecenoyl)-glycerol + CoA. The enzyme catalyses 1-O-(9Z-octadecenyl)-glycerol + (9Z)-octadecenoyl-CoA = 1-O-(9Z-octadecyl)-3-(9Z-octadecenoyl)-glycerol + CoA. It carries out the reaction 1-(9Z-octadecenoyl)-glycerol + (9Z)-octadecenoyl-CoA = 1,2-di-(9Z-octadecenoyl)-glycerol + CoA. The catalysed reaction is 2-(9Z-octadecenoyl)-glycerol + (9Z)-octadecenoyl-CoA = 1,2-di-(9Z-octadecenoyl)-sn-glycerol + CoA. It catalyses the reaction 1-O-(9Z-octadecyl)-3-(9Z-octadecenoyl)-glycerol + (9Z)-octadecenoyl-CoA = 1-O-(9Z-octadecenyl)-2,3-di-(9Z-octadecenoyl)glycerol + CoA. The enzyme catalyses 1,2-di-(9Z-octadecenoyl)-glycerol + (9Z)-octadecenoate + H(+) = 1,2,3-tri-(9Z-octadecenoyl)-glycerol + H2O. It functions in the pathway lipid metabolism; glycerolipid metabolism. Its function is as follows. Catalyzes the terminal and only committed step in triacylglycerol synthesis by using diacylglycerol and fatty acyl CoA as substrates. Highly expressed in epithelial cells of the small intestine and its activity is essential for the absorption of dietary fats. In liver, plays a role in esterifying exogenous fatty acids to glycerol, and is required to synthesize fat for storage. Also present in female mammary glands, where it produces fat in the milk. May be involved in VLDL (very low density lipoprotein) assembly. In contrast to DGAT2 it is not essential for survival. Functions as the major acyl-CoA retinol acyltransferase (ARAT) in the skin, where it acts to maintain retinoid homeostasis and prevent retinoid toxicity leading to skin and hair disorders. Exhibits additional acyltransferase activities, includin acyl CoA:monoacylglycerol acyltransferase (MGAT), wax monoester and wax diester synthases. Also able to use 1-monoalkylglycerol (1-MAkG) as an acyl acceptor for the synthesis of monoalkyl-monoacylglycerol (MAMAG). This Mus musculus (Mouse) protein is Diacylglycerol O-acyltransferase 1.